The sequence spans 103 residues: ATP synthase F(0) complex subunit g, mitochondrial (103 aa).

N-acetylalanine is present on A2. N6-acetyllysine is present on residues K11, K24, and K54.

It belongs to the ATPase g subunit family. Component of the ATP synthase complex composed at least of ATP5F1A/subunit alpha, ATP5F1B/subunit beta, ATP5MC1/subunit c (homooctomer), MT-ATP6/subunit a, MT-ATP8/subunit 8, ATP5ME/subunit e, ATP5MF/subunit f, ATP5MG/subunit g, ATP5MK/subunit k, ATP5MJ/subunit j, ATP5F1C/subunit gamma, ATP5F1D/subunit delta, ATP5F1E/subunit epsilon, ATP5PF/subunit F6, ATP5PB/subunit b, ATP5PD/subunit d, ATP5PO/subunit OSCP. ATP synthase complex consists of a soluble F(1) head domain (subunits alpha(3) and beta(3)) - the catalytic core - and a membrane F(0) domain - the membrane proton channel (subunits c, a, 8, e, f, g, k and j). These two domains are linked by a central stalk (subunits gamma, delta, and epsilon) rotating inside the F1 region and a stationary peripheral stalk (subunits F6, b, d, and OSCP).

It is found in the mitochondrion. The protein resides in the mitochondrion inner membrane. In terms of biological role, subunit g, of the mitochondrial membrane ATP synthase complex (F(1)F(0) ATP synthase or Complex V) that produces ATP from ADP in the presence of a proton gradient across the membrane which is generated by electron transport complexes of the respiratory chain. ATP synthase complex consist of a soluble F(1) head domain - the catalytic core - and a membrane F(1) domain - the membrane proton channel. These two domains are linked by a central stalk rotating inside the F(1) region and a stationary peripheral stalk. During catalysis, ATP synthesis in the catalytic domain of F(1) is coupled via a rotary mechanism of the central stalk subunits to proton translocation. In vivo, can only synthesize ATP although its ATP hydrolase activity can be activated artificially in vitro. Part of the complex F(0) domain. This chain is ATP synthase F(0) complex subunit g, mitochondrial, found in Rattus norvegicus (Rat).